Consider the following 448-residue polypeptide: MRENVVVSNMERESGKPVAVVAVVTEPWFTQRYREYLQRQKLFDTQHRVEKMPDGSVALPVLGETLPEQHLQELRNRVAPGSPCMLTQLPDPVPSKRAQGCSPAQKLCLEVSRWVEGRGVKWSAELEADLPRSWQRHGNLLLLSEDCFQAKQWKNLGPELWETVALALGVQRLAKRGRVSPDGTRTPAVTLLLGDHGWVEHVDNGIRYKFDVTQCMFSFGNITEKLRVASLSCAGEVLVDLYAGIGYFTLPFLVHAGAAFVHACEWNPHAVVALRNNLEINGVADRCQIHFGDNRKLKLSNIADRVILGLIPSSEEGWPIACQVLRQDAGGILHIHQNVESFPGKNLQALGVSKVEKEHWLYPQQITTNQWKNGATRDSRGKMLSPATKPEWQRWAESAETRIATLLQQVHGKPWKTQILHIQPVKSYAPHVDHIVLDLECCPCPSVG.

S-adenosyl-L-methionine is bound by residues Ser218, Lys225, Glu265, and 293-294; that span reads DN.

The protein belongs to the class I-like SAM-binding methyltransferase superfamily. TRM5/TYW2 family.

The enzyme catalyses 4-demethylwyosine(37) in tRNA(Phe) + S-adenosyl-L-methionine = 4-demethyl-7-[(3S)-3-amino-3-carboxypropyl]wyosine(37) in tRNA(Phe) + S-methyl-5'-thioadenosine + H(+). It functions in the pathway tRNA modification; wybutosine-tRNA(Phe) biosynthesis. Functionally, S-adenosyl-L-methionine-dependent transferase that acts as a component of the wybutosine biosynthesis pathway. Wybutosine is a hyper modified guanosine with a tricyclic base found at the 3'-position adjacent to the anticodon of eukaryotic phenylalanine tRNA. Catalyzes the transfer of the alpha-amino-alpha-carboxypropyl (acp) group from S-adenosyl-L-methionine to the C-7 position of 4-demethylwyosine (imG-14) to produce wybutosine-86. This chain is tRNA wybutosine-synthesizing protein 2 homolog (TRMT12), found in Homo sapiens (Human).